The sequence spans 776 residues: Reticulon-1 (776 aa).

Disordered regions lie at residues 1 to 101 (MAAP…KDGE), 137 to 168 (SESP…DSGI), 205 to 245 (VKHQ…PAPV), and 285 to 580 (LTEI…APPP). Ser-327 carries the phosphoserine modification. The segment covering 328–341 (PGSITPPSSGTEPS) has biased composition (low complexity). Residues Ser-350, Ser-352, and Ser-487 each carry the phosphoserine modification. Basic and acidic residues predominate over residues 497 to 511 (AIREETGVRAEERAP). The region spanning 589 to 776 (AIDLLYWRDI…KIPGAKRHAE (188 aa)) is the Reticulon domain. Helical transmembrane passes span 603 to 623 (IVFG…VVSV) and 705 to 725 (FAVL…LTLL).

As to quaternary structure, interacts with NDRG1. Interacts with BACE1. Interacts with TMEM33. In terms of assembly, interacts with UGCG; regulates the ceramide glucosyltransferase activity of UGCG. In terms of processing, isoforms RTN1-A and RTN1-B are phosphorylated. Expressed in neural and neuroendocrine tissues and cell cultures derived therefrom. Expression of isoform RTN1-C is strongly correlated with neuronal differentiation.

It is found in the endoplasmic reticulum membrane. The protein localises to the golgi apparatus membrane. Functionally, inhibits amyloid precursor protein processing, probably by blocking BACE1 activity. This chain is Reticulon-1 (RTN1), found in Homo sapiens (Human).